The sequence spans 828 residues: Kinesin-associated protein 3 (828 aa).

ARM repeat units follow at residues 332–372 (YVEN…NLSF), 373–411 (DTDL…HVSQ), and 577–611 (DDSC…CQIV).

Heterotrimer of a 115 kDa subunit (KAP115) and two kinesin-like subunits of 95 kDa (KRP95) and 85 kDa (KRP85).

Its function is as follows. Binds to the tail domain of the KRP85/KRP95 heterodimer to form a heterotrimeric kinesin-II complex and may regulate the spindle vesicle targeting of this complex. In Strongylocentrotus purpuratus (Purple sea urchin), this protein is Kinesin-associated protein 3 (KAP115).